Here is a 358-residue protein sequence, read N- to C-terminus: Nicotinate-nucleotide--dimethylbenzimidazole phosphoribosyltransferase (358 aa).

Glu314 serves as the catalytic Proton acceptor.

It belongs to the CobT family.

The catalysed reaction is 5,6-dimethylbenzimidazole + nicotinate beta-D-ribonucleotide = alpha-ribazole 5'-phosphate + nicotinate + H(+). The protein operates within nucleoside biosynthesis; alpha-ribazole biosynthesis; alpha-ribazole from 5,6-dimethylbenzimidazole: step 1/2. In terms of biological role, catalyzes the synthesis of alpha-ribazole-5'-phosphate from nicotinate mononucleotide (NAMN) and 5,6-dimethylbenzimidazole (DMB). In Mycobacterium marinum (strain ATCC BAA-535 / M), this protein is Nicotinate-nucleotide--dimethylbenzimidazole phosphoribosyltransferase.